The primary structure comprises 276 residues: Protein HemX (276 aa).

A run of 8 helical transmembrane segments spans residues 9–29, 40–60, 66–86, 93–113, 132–152, 187–207, 217–237, and 247–267; these read LNEG…IDFL, FWLL…FMWV, VLNV…LSLV, VDFI…IHTF, LVIH…SFVF, VLNV…VIWA, FDAK…YLYI, and VAAL…FLLG.

This sequence to M.leprae U1620K.

The protein resides in the cell membrane. Its function is as follows. Required for HemL synthesis. The polypeptide is Protein HemX (hemX) (Bacillus subtilis (strain 168)).